The following is a 555-amino-acid chain: Xylulose kinase (555 aa).

Substrate-binding residues include histidine 88, arginine 158, aspartate 274, and asparagine 275. ATP is bound by residues tryptophan 357, 455–456 (GA), and asparagine 459.

The protein belongs to the FGGY kinase family.

It localises to the cytoplasm. It catalyses the reaction D-xylulose + ATP = D-xylulose 5-phosphate + ADP + H(+). The polypeptide is Xylulose kinase (Schizosaccharomyces pombe (strain 972 / ATCC 24843) (Fission yeast)).